Here is a 129-residue protein sequence, read N- to C-terminus: Small ribosomal subunit protein uS11 (129 aa).

It belongs to the universal ribosomal protein uS11 family. As to quaternary structure, part of the 30S ribosomal subunit. Interacts with proteins S7 and S18. Binds to IF-3.

In terms of biological role, located on the platform of the 30S subunit, it bridges several disparate RNA helices of the 16S rRNA. Forms part of the Shine-Dalgarno cleft in the 70S ribosome. The polypeptide is Small ribosomal subunit protein uS11 (Aromatoleum aromaticum (strain DSM 19018 / LMG 30748 / EbN1) (Azoarcus sp. (strain EbN1))).